Here is a 138-residue protein sequence, read N- to C-terminus: ATP synthase subunit g, mitochondrial (138 aa).

This sequence belongs to the ATPase g subunit family. F-type ATP synthases have 2 components, the catalytic core F(1) and the membrane-embedded component F(0), linked together by a central stalk and a peripheral stalk. The central stalk, also called rotor shaft, is often seen as part of F(1). The peripheral stalk is seen as part of F(0). F(0) contains the membrane channel next to the rotor. F-type ATP synthases form dimers but each monomer functions independently in ATP generation. The dimer consists of 17 different polypeptides: ATP1 (subunit alpha, 3 molecules per monomer, part of F(1)), ATP2 (subunit beta, 3 copies per monomer, part of F(1)), ATP3 (subunit gamma, part of the central stalk), ATP4 (subunit b, part of the peripheral stalk), ATP5/OSCP (subunit 5/OSCP, part of the peripheral stalk), ATP6 (subunit a, part of the peripheral stalk), ATP7 (subunit d, part of the peripheral stalk), ATP8 (subunit 8, part of the peripheral stalk), OLI1 (subunit c, part of the rotor, 10 molecules per monomer), ATP14 (subunit h, part of the peripheral stalk), ATP15 (subunit epsilon, part of the central stalk), ATP16 (subunit delta, part of the central stalk), ATP17 (subunit f, part of the peripheral stalk), ATP18 (subunit i/j, part of the peripheral stalk), ATP19 (subunit k, dimer-specific, at interface between monomers), ATP20 (subunit g, at interface between monomers), TIM11 (subunit e, at interface between monomers).

The protein resides in the mitochondrion inner membrane. In terms of biological role, mitochondrial membrane ATP synthase (F(1)F(0) ATP synthase or Complex V) produces ATP from ADP in the presence of a proton gradient across the membrane which is generated by electron transport complexes of the respiratory chain. F-type ATP synthases consist of two structural domains, F(1) - containing the extramembraneous catalytic core, and F(0) - containing the membrane proton channel, linked together by a central stalk and a peripheral stalk. During catalysis, ATP synthesis in the catalytic domain of F(1) is coupled via a rotary mechanism of the central stalk subunits to proton translocation. Part of the complex F(0) domain. Minor subunit located with subunit a/ATP6 in the membrane. Together with subunit e/TIM11, probably contributes to membrane curvature at the site of the ATP synthase dimer, ultimately contributing to formation of cristae. This chain is ATP synthase subunit g, mitochondrial, found in Yarrowia lipolytica (strain CLIB 122 / E 150) (Yeast).